The sequence spans 728 residues: Cytosolic endo-beta-N-acetylglucosaminidase (728 aa).

The 95-residue stretch at 287–381 (QNRVFFDACD…NFLLNEDKFW (95 aa)) folds into the BRCT domain.

This sequence belongs to the glycosyl hydrolase 85 family.

Its subcellular location is the cytoplasm. The protein resides in the cytosol. It carries out the reaction an N(4)-(oligosaccharide-(1-&gt;3)-[oligosaccharide-(1-&gt;6)]-beta-D-Man-(1-&gt;4)-beta-D-GlcNAc-(1-&gt;4)-alpha-D-GlcNAc)-L-asparaginyl-[protein] + H2O = an oligosaccharide-(1-&gt;3)-[oligosaccharide-(1-&gt;6)]-beta-D-Man-(1-&gt;4)-D-GlcNAc + N(4)-(N-acetyl-beta-D-glucosaminyl)-L-asparaginyl-[protein]. Its function is as follows. Endoglycosidase that releases N-glycans from glycoproteins by cleaving the beta-1,4-glycosidic bond in the N,N'-diacetylchitobiose core. Involved in the processing of free oligosaccharides in the cytosol. The chain is Cytosolic endo-beta-N-acetylglucosaminidase (ENGASE) from Gallus gallus (Chicken).